The sequence spans 84 residues: Chymotrypsin inhibitor Ani s 6 (84 aa).

An N-terminal signal peptide occupies residues 1–22 (MFQSTFFLVLMVCVATARFANK). Intrachain disulfides connect Cys25-Cys58, Cys34-Cys54, Cys38-Cys50, Cys42-Cys79, and Cys60-Cys73. Positions 25-79 (CPPNEEYNECGNPCQEKCDNGEPVICTYQCEHRCFCKQGYVRLTEDGECVPEEFC) constitute a TIL domain.

This sequence belongs to the serine protease inhibitor-like (TIL domain-containing) family.

The protein localises to the secreted. In terms of biological role, inhibits alpha-chymotrypsin, but not trypsin. This chain is Chymotrypsin inhibitor Ani s 6, found in Anisakis simplex (Herring worm).